The primary structure comprises 566 residues: SRSF protein kinase 3 (566 aa).

A compositionally biased stretch (gly residues) spans 1–13 (MSASTGGGGGGDS). A disordered region spans residues 1–60 (MSASTGGGGGGDSGSSSSSSSQASCGPEPSGSELAPPTPAPRMLQGLLGSDDEEQEDPKD). Over residues 14–26 (GSSSSSSSQASCG) the composition is skewed to low complexity. Ser50 is subject to Phosphoserine. Positions 79–564 (YHVVRKLGWG…AADCLQHPWL (486 aa)) constitute a Protein kinase domain. Residues 85-93 (LGWGHFSTV) and Lys108 each bind ATP. Asp212 acts as the Proton acceptor in catalysis. Over residues 236–254 (EWQQSGAPPPSRSTVSTAP) the composition is skewed to polar residues. Disordered regions lie at residues 236–283 (EWQQ…LLEE) and 295–353 (EAAA…SGFS). Over residues 263 to 278 (SKNKRKKMRRKRKQQK) the composition is skewed to basic residues. A Phosphoserine modification is found at Ser329. Over residues 330-339 (PASSSPAPGG) the composition is skewed to low complexity. Over residues 344–353 (SPGSQTSGFS) the composition is skewed to polar residues.

This sequence belongs to the protein kinase superfamily. In terms of tissue distribution, highly expressed in skeletal muscle, heart, uterus and parorchis. Weakly expressed in brain, stomach, small intestine and ovary.

The protein resides in the nucleus. It localises to the cytoplasm. The catalysed reaction is L-seryl-[protein] + ATP = O-phospho-L-seryl-[protein] + ADP + H(+). It carries out the reaction L-threonyl-[protein] + ATP = O-phospho-L-threonyl-[protein] + ADP + H(+). Functionally, serine/arginine-rich protein-specific kinase which specifically phosphorylates its substrates at serine residues located in regions rich in arginine/serine dipeptides, known as RS domains. Phosphorylates the SR splicing factor SRSF1 and the lamin-B receptor (LBR) in vitro. Required for normal muscle development. The polypeptide is SRSF protein kinase 3 (SRPK3) (Sus scrofa (Pig)).